The chain runs to 149 residues: L-alanine exporter AlaE (149 aa).

Transmembrane regions (helical) follow at residues 16 to 36, 46 to 66, 85 to 105, and 112 to 132; these read FAMV…LSGM, LVAI…RDAI, VLAY…TVGA, and AAVS…GYFL.

Belongs to the AlaE exporter family.

It localises to the cell inner membrane. Exports L-alanine. The polypeptide is L-alanine exporter AlaE (Citrobacter koseri (strain ATCC BAA-895 / CDC 4225-83 / SGSC4696)).